A 472-amino-acid chain; its full sequence is D-2-hydroxyglutarate dehydrogenase (472 aa).

Residues 36 to 215 form the FAD-binding PCMH-type domain; the sequence is WTPNPLAIAL…VEATLRLTDP (180 aa). (R)-2-hydroxyglutarate is bound by residues R323, T327, and K337. (R)-malate-binding residues include R323, T327, and K337. H372 and H379 together coordinate Zn(2+). N381 contacts (R)-2-hydroxyglutarate. E418 is a Zn(2+) binding site. (R)-2-hydroxyglutarate is bound at residue H419. Residue H419 coordinates (R)-malate.

Belongs to the FAD-binding oxidoreductase/transferase type 4 family. Homodimer. The cofactor is FAD.

It catalyses the reaction (R)-2-hydroxyglutarate + A = 2-oxoglutarate + AH2. It carries out the reaction (R)-malate + A = oxaloacetate + AH2. With respect to regulation, activated by Zn(2+) ions. Its function is as follows. Catalyzes the dehydrogenation of (R)-2-hydroxyglutarate (D-2-hydroxyglutarate) to 2-oxoglutarate. Also has a low activity on D-malate in vitro. Is functionally tied to L-serine biosynthesis, via its coupling with the D-3-phosphoglycerate dehydrogenase SerA, encoded by the adjacent gene in the locus. Active in vitro with the artificial electron acceptor 2,6-dichlorophenolindophenol (DCPIP), but not with NAD, NADP, or cytochrome c. Also displays a very low oxidase activity in vitro on D-2-hydroxyglutarate and L-2-hydroxyglutarate with O2 as the electron acceptor, but this activity is most likely not physiological. This chain is D-2-hydroxyglutarate dehydrogenase, found in Xanthomonas citri pv. viticola (strain LMG 965 / NCPPB 2475 / ICMP 3867 / CFBP 7660) (Xanthomonas campestris pv. viticola).